The sequence spans 70 residues: ATP synthase subunit c (70 aa).

Helical transmembrane passes span A3–A23 and L44–I64.

Belongs to the ATPase C chain family. As to quaternary structure, F-type ATPases have 2 components, F(1) - the catalytic core - and F(0) - the membrane proton channel. F(1) has five subunits: alpha(3), beta(3), gamma(1), delta(1), epsilon(1). F(0) has three main subunits: a(1), b(2) and c(10-14). The alpha and beta chains form an alternating ring which encloses part of the gamma chain. F(1) is attached to F(0) by a central stalk formed by the gamma and epsilon chains, while a peripheral stalk is formed by the delta and b chains.

It localises to the cell membrane. In terms of biological role, f(1)F(0) ATP synthase produces ATP from ADP in the presence of a proton or sodium gradient. F-type ATPases consist of two structural domains, F(1) containing the extramembraneous catalytic core and F(0) containing the membrane proton channel, linked together by a central stalk and a peripheral stalk. During catalysis, ATP synthesis in the catalytic domain of F(1) is coupled via a rotary mechanism of the central stalk subunits to proton translocation. Key component of the F(0) channel; it plays a direct role in translocation across the membrane. A homomeric c-ring of between 10-14 subunits forms the central stalk rotor element with the F(1) delta and epsilon subunits. The sequence is that of ATP synthase subunit c from Caldicellulosiruptor saccharolyticus (strain ATCC 43494 / DSM 8903 / Tp8T 6331).